A 3179-amino-acid chain; its full sequence is Guanylate cyclase beta (3179 aa).

Residues 1–60 (MKTQTLSLMNINGKRKFLGTNNKIYRKVIINPTSEDDIQKFCRNYFRIYNFSLYNFIRRL) are Cytoplasmic-facing. The chain crosses the membrane as a helical span at residues 61-81 (ISFDAILVYSLFLTVYIFSEI). Residues 82–88 (NHGETKK) lie on the Extracellular side of the membrane. The chain crosses the membrane as a helical span at residues 89–109 (YLFIDTAISLFFNIILLIVIE). The Cytoplasmic segment spans residues 110-295 (SLFELKKLKD…FCIKMNNIVY (186 aa)). A helical transmembrane segment spans residues 296–316 (YLIFMYFVFVVLSIVIKTIFF). Over 317-328 (HKKNSFQNSRDS) the chain is Extracellular. The helical transmembrane segment at 329-349 (FLSMLEDFVGLYILVLPIMMY) threads the bilayer. Topologically, residues 350–988 (SEKSLIYIIQ…GRLNRFSLCK (639 aa)) are cytoplasmic. Residues 989–1009 (VFLWIIYLKITVVSFYFFHNF) traverse the membrane as a helical segment. Over 1010–1020 (DNYFSGSSASS) the chain is Extracellular. A helical membrane pass occupies residues 1021-1041 (ILYTQTTFALLHYFLIIAFSA). Topologically, residues 1042-1069 (YEIDLPYKFVRRLPYIYQLSRRKYFLNN) are cytoplasmic. The helical transmembrane segment at 1070–1090 (NIILLTIIEAILISLTSYYIL) threads the bilayer. The Extracellular portion of the chain corresponds to 1091-1102 (RLNVFHLITHRE). A helical transmembrane segment spans residues 1103 to 1123 (FTFHIFILNVFITTEKILLLS). The Cytoplasmic segment spans residues 1124–1127 (KTWH). A helical membrane pass occupies residues 1128-1148 (IYFFIMAVLIIGILLIYVNIF). At 1149-1168 (TLVDCIKNGKCEFSLFQMEN) the chain is on the extracellular side. Residues 1169 to 1189 (IYFWTSLFPILYINFIFDKLM) form a helical membrane-spanning segment. The Cytoplasmic portion of the chain corresponds to 1190-1304 (KYIKNRIYPD…YEKGNKLKLR (115 aa)). Residues 1305-1325 (IIVILLFLIYIIIFSSQTIID) traverse the membrane as a helical segment. The Extracellular portion of the chain corresponds to 1326-1331 (INTKSN). The helical transmembrane segment at 1332 to 1352 (IHYITMFYIIYFVLACVLLIY) threads the bilayer. Topologically, residues 1353 to 1360 (IRIRNKAT) are cytoplasmic. A helical transmembrane segment spans residues 1361 to 1381 (STFFFFLSRFLLICGFCIELY). At 1382-1401 (DNISNDILNVLITYSFTVSY) the chain is on the extracellular side. N-linked (GlcNAc...) asparagine glycosylation is present at asparagine 1383. The helical transmembrane segment at 1402 to 1422 (IFFMSFKILEALLVCISILLL) threads the bilayer. Residues 1423–1464 (TFGVYYEKNKNMIDICTHFCSNPYLSINNLDHMNISCLCKKQ) are Cytoplasmic-facing. The chain crosses the membrane as a helical span at residues 1465–1485 (IVIFLISLLSFTLICLSMKYY). Over 1486 to 1507 (EIFYLKKKFLFRYKQKVNLAKQ) the chain is Extracellular. A helical membrane pass occupies residues 1508–1528 (IEILHTMLPNFLVEYLLISDP). At 1529-2739 (KNDGIMVGKN…IINIDLTKKL (1211 aa)) the chain is on the cytoplasmic side. The 153-residue stretch at 1548-1700 (SVIFCDIDDF…DTVNTASRMK (153 aa)) folds into the Guanylate cyclase 1 domain. Disordered regions lie at residues 2123–2153 (LHNY…YTSS), 2355–2379 (SINK…KDKK), and 2576–2656 (KDSD…HHHS). Positions 2131 to 2142 (NKNKNKKNNKNV) are enriched in basic residues. A compositionally biased stretch (low complexity) spans 2584–2607 (NNNKISKNRYNNNNNNNNSNYSNI). Residues 2614–2645 (HNNKKNHHHNNNKYHHHNNNKYHHHNNNKYHH) show a composition bias toward basic residues. The chain crosses the membrane as a helical span at residues 2740-2760 (IIIFIFTEIFLSLCNIIELSF). The Extracellular portion of the chain corresponds to 2761–2770 (YEKKLRYNDS). Asparagine 2768 carries N-linked (GlcNAc...) asparagine glycosylation. A helical membrane pass occupies residues 2771 to 2791 (IVIIWLIRSIYLFIITYIWII). Residues 2792-2809 (LKTKLKEYKNNSSKMMWT) lie on the Cytoplasmic side of the membrane. The chain crosses the membrane as a helical span at residues 2810–2830 (IFILNIFLCSWGIILIDLSCI). Over 2831–2842 (HYSMLLGNKNER) the chain is Extracellular. Residues 2843 to 2863 (ALFFMKDASELIICIQLIFIK) traverse the membrane as a helical segment. Over 2864-2870 (NMLFKHK) the chain is Cytoplasmic. A helical membrane pass occupies residues 2871–2891 (FFFFVFFYIFLIYSFSKLFSI). At 2892–2895 (HTCQ) the chain is on the extracellular side. A helical transmembrane segment spans residues 2896–2916 (THICCSIILFISINILYFWYS). Over 2917–3179 (EYLDRIQFLV…KLRQKKGLRS (263 aa)) the chain is Cytoplasmic. The 135-residue stretch at 2968–3102 (AFLFADIVGF…LDVLIANKIE (135 aa)) folds into the Guanylate cyclase 2 domain. The Mg(2+) site is built by aspartate 2973, isoleucine 2974, and aspartate 3017.

The protein in the N-terminal section; belongs to the cation transport ATPase (P-type) (TC 3.A.3) family. Type IV subfamily. In the C-terminal section; belongs to the adenylyl cyclase class-4/guanylyl cyclase family. It depends on Mg(2+) as a cofactor. Mn(2+) is required as a cofactor.

The protein resides in the membrane. The enzyme catalyses GTP = 3',5'-cyclic GMP + diphosphate. With respect to regulation, basal guanylate activity of the recombinant guanylate cyclase domains 1 and 2 is not modulated by an increase in Ca(2+) levels or by the gametogenesis inducer xanthurenic acid. Catalyzes the synthesis of the second messenger cGMP from GTP. Regulates cGMP production in gametocytes; however, is dispensable for the initiation of gametogenesis. Does not have adenylate cyclase activity. In Plasmodium falciparum (isolate 3D7), this protein is Guanylate cyclase beta.